Reading from the N-terminus, the 398-residue chain is UDP-D-apiose/UDP-D-xylose synthase (398 aa).

An NAD(+)-binding site is contributed by 57 to 88 (DVYCDKIRHLVDPAPPHLHGRISFHRLNIKND). R190 lines the substrate pocket. Y193 acts as the Proton acceptor in catalysis. Residue 193–197 (YACAK) participates in NAD(+) binding. Position 222 (N222) interacts with substrate. Position 243 (R243) interacts with NAD(+). Residues 244–248 (VLACF), 261–268 (VDGGQSQR), and 345–349 (DSDKR) contribute to the substrate site.

Belongs to the NAD(P)-dependent epimerase/dehydratase family. Homodimer. NAD(+) serves as cofactor.

Its subcellular location is the cytoplasm. Its function is as follows. Catalyzes the conversion of UDP-D-glucuronate to a mixture of UDP-D-apiose and UDP-D-xylose. D-Apiose (3-C-hydroxymethyl-d-erythrose) is the only plant cell wall monosaccharide with a branched carbon skeleton and found in rhamnogalacturonan II (RG-II), apiogalacturonan, and several apioglycosides. The protein is UDP-D-apiose/UDP-D-xylose synthase of Oryza sativa subsp. japonica (Rice).